The chain runs to 173 residues: uncharacterized protein (173 aa).

The next 4 helical transmembrane spans lie at 13–35 (LQVILKFFFALLCFCIILFPLLS), 50–72 (IIFIYYFMSLYSLNIFSIFFLGL), 107–129 (NYLINFVVFCFYCLFILNFKYLL), and 139–161 (GYLIIFFQSLTTIFSYNIIRLIL).

It localises to the cell membrane. This is an uncharacterized protein from Rickettsia prowazekii (strain Madrid E).